We begin with the raw amino-acid sequence, 377 residues long: S-adenosylmethionine synthase (377 aa).

His14 is a binding site for ATP. Residue Asp16 participates in Mg(2+) binding. Glu42 contacts K(+). L-methionine is bound at residue Gln98. A flexible loop region spans residues 98–108 (QSADIALGIDL). ATP is bound by residues 162–164 (DMK), 228–229 (RF), Asp237, 243–244 (RK), Ala260, and Lys264. Asp237 is an L-methionine binding site. Lys268 provides a ligand contact to L-methionine.

It belongs to the AdoMet synthase family. Homotetramer; dimer of dimers. Mg(2+) is required as a cofactor. The cofactor is K(+).

It localises to the cytoplasm. The catalysed reaction is L-methionine + ATP + H2O = S-adenosyl-L-methionine + phosphate + diphosphate. It functions in the pathway amino-acid biosynthesis; S-adenosyl-L-methionine biosynthesis; S-adenosyl-L-methionine from L-methionine: step 1/1. Catalyzes the formation of S-adenosylmethionine (AdoMet) from methionine and ATP. The overall synthetic reaction is composed of two sequential steps, AdoMet formation and the subsequent tripolyphosphate hydrolysis which occurs prior to release of AdoMet from the enzyme. In Mesoplasma florum (strain ATCC 33453 / NBRC 100688 / NCTC 11704 / L1) (Acholeplasma florum), this protein is S-adenosylmethionine synthase.